Reading from the N-terminus, the 197-residue chain is MHKKLYLASNSPRRWALLQNLGLALLPLASEIDETAHANEMAQDYCSRIAREKNQAAQAVRIRQNLAEYPILTADIMVSIDGEILGKPSHQQQAVEMLKKLSGRTHQVYTAVCVSANQQLFECIHSSEVTFKRLSEAEIYAYIATGEPMDKAGAYGIQALGGIFIQHLAGSFTGVMGLPIFETVALLKKVNIEVLPS.

Asp75 serves as the catalytic Proton acceptor.

Belongs to the Maf family. A divalent metal cation is required as a cofactor.

It is found in the cytoplasm. It catalyses the reaction a ribonucleoside 5'-triphosphate + H2O = a ribonucleoside 5'-phosphate + diphosphate + H(+). It carries out the reaction a 2'-deoxyribonucleoside 5'-triphosphate + H2O = a 2'-deoxyribonucleoside 5'-phosphate + diphosphate + H(+). Functionally, nucleoside triphosphate pyrophosphatase. May have a dual role in cell division arrest and in preventing the incorporation of modified nucleotides into cellular nucleic acids. The protein is Nucleoside triphosphate pyrophosphatase of Haemophilus ducreyi (strain 35000HP / ATCC 700724).